The following is a 118-amino-acid chain: Holo-[acyl-carrier-protein] synthase (118 aa).

Mg(2+)-binding residues include D8 and E58.

It belongs to the P-Pant transferase superfamily. AcpS family. Mg(2+) serves as cofactor.

The protein resides in the cytoplasm. The enzyme catalyses apo-[ACP] + CoA = holo-[ACP] + adenosine 3',5'-bisphosphate + H(+). Functionally, transfers the 4'-phosphopantetheine moiety from coenzyme A to a Ser of acyl-carrier-protein. The protein is Holo-[acyl-carrier-protein] synthase of Listeria monocytogenes serotype 4a (strain HCC23).